The primary structure comprises 291 residues: Hydroxysteroid 11-beta-dehydrogenase 1-like protein B (291 aa).

A signal peptide spans 1-17 (MAGVILLLLSLCVGYIA). Residues 40 to 66 (GSST…TARR), 91 to 92 (DM), and 118 to 120 (NHI) contribute to the NADP(+) site. A substrate-binding site is contributed by Ser170. Tyr183 functions as the Proton acceptor in the catalytic mechanism. Residues 183 to 187 (YCASK) and 216 to 222 (GYIDTEN) each bind NADP(+).

This sequence belongs to the short-chain dehydrogenases/reductases (SDR) family.

Its subcellular location is the secreted. It catalyses the reaction cortisone + NADPH + H(+) = cortisol + NADP(+). In terms of biological role, unidirectional NADP(+)-dependent cortisol dehydrogenase (in vitro). This Xenopus laevis (African clawed frog) protein is Hydroxysteroid 11-beta-dehydrogenase 1-like protein B (hsd11b1l-b).